Here is a 247-residue protein sequence, read N- to C-terminus: ATP synthase subunit a, chloroplastic (247 aa).

5 helical membrane passes run 28 to 48 (GQVL…CLLG), 95 to 115 (VPFL…GALI), 134 to 154 (INTT…AGIS), 199 to 219 (LVVG…IMLL), and 220 to 240 (GLFT…AYIG).

This sequence belongs to the ATPase A chain family. In terms of assembly, F-type ATPases have 2 components, CF(1) - the catalytic core - and CF(0) - the membrane proton channel. CF(1) has five subunits: alpha(3), beta(3), gamma(1), delta(1), epsilon(1). CF(0) has four main subunits: a, b, b' and c.

The protein localises to the plastid. The protein resides in the chloroplast thylakoid membrane. In terms of biological role, key component of the proton channel; it plays a direct role in the translocation of protons across the membrane. This Chlorella vulgaris (Green alga) protein is ATP synthase subunit a, chloroplastic.